A 545-amino-acid polypeptide reads, in one-letter code: MESYKPVWLKGAVILAINLIDKGYKPVAVGLGERDFYIDVKSDTSITLDEVKKAINENVLANVPIENNQIVYKGNKVSIIEDKVSISTNLNPKYFEILNISTHHPNPNEQYVRIRGVAFETEEQLKDYLTWLEKAEETDHRLIGEKLDLFSFHEEAGSGLVLFHPKGQTIRNELIAFMREINDSMGYQEVYTSHVFKTDIWKISGHYTLYRDKLIVFNMEGDEYGVKPMNCPAHILIYKSKPRTYRDLPIRFSEFGHVYRWEKKGELYGLLRVRGFVQDDGHIFLREDQLMEEIKMLISKTVEVWHKFGFKDDDIKPYLSTRPDESIGSDELWEKATNALISALQESGLKFGIKEKEGAFYGPKIDFEIRDSLGRWWQLSTIQVDFNLPERFKLEYIDKDGIKKRPVMVHRAIYGSIDRFVAILLEHFKGKLPTWLSSVQVRVLPITDEVNEYAEKVLNDMRKRRIRAEIDYAGETLSKRIKNAYDQGVPYILIVGKKEASEGTVTVRARGNIEVRNVKFEKFLELLITEIAQRDVEQTTVKALK.

The tract at residues 139 to 433 is catalytic; the sequence is DHRLIGEKLD…LLEHFKGKLP (295 aa). Residues Cys231, His282, and His410 each coordinate Zn(2+).

This sequence belongs to the class-II aminoacyl-tRNA synthetase family. Homodimer. Probably interacts with its editing subunit. The cofactor is Zn(2+).

It is found in the cytoplasm. It carries out the reaction tRNA(Thr) + L-threonine + ATP = L-threonyl-tRNA(Thr) + AMP + diphosphate + H(+). Catalyzes the attachment of threonine to tRNA(Thr) in a two-step reaction: L-threonine is first activated by ATP to form Thr-AMP and then transferred to the acceptor end of tRNA(Thr). Also activates L-serine and transfers it to tRNA(Thr) but cannot deacylate incorrectly charged amino acid; unlike most archaea the editing function is found in a freestanding protein. The chain is Threonine--tRNA ligase catalytic subunit from Saccharolobus islandicus (strain M.16.4 / Kamchatka #3) (Sulfolobus islandicus).